The chain runs to 378 residues: GTP 3',8-cyclase 3 (378 aa).

Residues 40–259 form the Radical SAM core domain; that stretch reads RCGRTMGDLR…STLGKKYGPI (220 aa). Residue Arg-49 coordinates GTP. [4Fe-4S] cluster contacts are provided by Cys-56 and Cys-60. An S-adenosyl-L-methionine-binding site is contributed by Tyr-62. Cys-63 contacts [4Fe-4S] cluster. Position 99 (Arg-99) interacts with GTP. Gly-103 contributes to the S-adenosyl-L-methionine binding site. Thr-134 contacts GTP. Residue Ser-158 coordinates S-adenosyl-L-methionine. A GTP-binding site is contributed by Lys-195. Met-229 contributes to the S-adenosyl-L-methionine binding site. The [4Fe-4S] cluster site is built by Cys-292 and Cys-295. Residue 297-299 participates in GTP binding; that stretch reads RSR. Cys-309 is a binding site for [4Fe-4S] cluster.

Belongs to the radical SAM superfamily. MoaA family. In terms of assembly, monomer and homodimer. [4Fe-4S] cluster is required as a cofactor.

The enzyme catalyses GTP + AH2 + S-adenosyl-L-methionine = (8S)-3',8-cyclo-7,8-dihydroguanosine 5'-triphosphate + 5'-deoxyadenosine + L-methionine + A + H(+). It functions in the pathway cofactor biosynthesis; molybdopterin biosynthesis. In terms of biological role, catalyzes the cyclization of GTP to (8S)-3',8-cyclo-7,8-dihydroguanosine 5'-triphosphate. The sequence is that of GTP 3',8-cyclase 3 from Mycobacterium bovis (strain ATCC BAA-935 / AF2122/97).